The primary structure comprises 63 residues: Prokaryotic ubiquitin-like protein Pup (63 aa).

Basic and acidic residues predominate over residues 1 to 11; sequence MAQEQTRRGGG. The tract at residues 1–36 is disordered; the sequence is MAQEQTRRGGGGDDDEFTSSTSVGQERREKLTEETD. An ARC ATPase binding region spans residues 20–57; the sequence is STSVGQERREKLTEETDDLLDEIDDVLEENAEDFVRAY. Positions 23–51 form a coiled coil; sequence VGQERREKLTEETDDLLDEIDDVLEENAE. Q63 bears the Deamidated glutamine mark. Q63 participates in a covalent cross-link: Isoglutamyl lysine isopeptide (Gln-Lys) (interchain with K-? in acceptor proteins).

The protein belongs to the prokaryotic ubiquitin-like protein family. Strongly interacts with the proteasome-associated ATPase ARC through a hydrophobic interface; the interacting region of Pup lies in its C-terminal half. There is one Pup binding site per ARC hexamer ring. Post-translationally, is modified by deamidation of its C-terminal glutamine to glutamate by the deamidase Dop, a prerequisite to the subsequent pupylation process.

The protein operates within protein degradation; proteasomal Pup-dependent pathway. Protein modifier that is covalently attached to lysine residues of substrate proteins, thereby targeting them for proteasomal degradation. The tagging system is termed pupylation. This chain is Prokaryotic ubiquitin-like protein Pup, found in Mycobacterium leprae (strain Br4923).